The chain runs to 358 residues: MKPSILEKLQQLGDRLEEVTHLLGQPEATADMDNYRKLTREHAELTPVVEVFQNYRLAQSDLADAEEMLSDPEMKDFAAEEIEAAKAKIGALDTELQKLLLPKDADDDKNIFIEVRAGTGGDEAALFAGDLLRMYSRYAERNRWQVEIVSANESELGGYKEVIARIIGLGAYSRLKFESGGHRVQRVPATESQGRIHTSACTVAVMPEADELEDIELNPVDLRIDTFRASGAGGQHINKTDSAVRITHLPTGMVVECQDGRSQHANKAQAMKVLAARLNDAQKREAQAKEAAERKSLIGSGDRSERIRTYNYPQGRVTDHRINLTLHKLDFVMDGDLAEITDALIAEHQAELLAAMGD.

Gln235 bears the N5-methylglutamine mark.

It belongs to the prokaryotic/mitochondrial release factor family. In terms of processing, methylated by PrmC. Methylation increases the termination efficiency of RF1.

The protein resides in the cytoplasm. Functionally, peptide chain release factor 1 directs the termination of translation in response to the peptide chain termination codons UAG and UAA. In Neisseria meningitidis serogroup C (strain 053442), this protein is Peptide chain release factor 1.